The primary structure comprises 101 residues: DNA-binding protein HU (101 aa).

This sequence belongs to the bacterial histone-like protein family. Homodimer.

In terms of biological role, histone-like DNA-binding protein which is capable of wrapping DNA to stabilize it, and thus to prevent its denaturation under extreme environmental conditions. This is DNA-binding protein HU (hup) from Rickettsia bellii (strain RML369-C).